Consider the following 399-residue polypeptide: 4-hydroxy-3-methylbut-2-enyl diphosphate reductase (399 aa).

A [4Fe-4S] cluster-binding site is contributed by Cys-66. Residue His-96 coordinates (2E)-4-hydroxy-3-methylbut-2-enyl diphosphate. His-96 is a dimethylallyl diphosphate binding site. Position 96 (His-96) interacts with isopentenyl diphosphate. Cys-157 contacts [4Fe-4S] cluster. His-185 is a (2E)-4-hydroxy-3-methylbut-2-enyl diphosphate binding site. His-185 contacts dimethylallyl diphosphate. His-185 contributes to the isopentenyl diphosphate binding site. The Proton donor role is filled by Glu-187. Thr-250 lines the (2E)-4-hydroxy-3-methylbut-2-enyl diphosphate pocket. Residue Cys-288 participates in [4Fe-4S] cluster binding. 4 residues coordinate (2E)-4-hydroxy-3-methylbut-2-enyl diphosphate: Ser-317, Ser-318, Asn-319, and Ser-379. Dimethylallyl diphosphate is bound by residues Ser-317, Ser-318, Asn-319, and Ser-379. Residues Ser-317, Ser-318, Asn-319, and Ser-379 each coordinate isopentenyl diphosphate.

The protein belongs to the IspH family. [4Fe-4S] cluster serves as cofactor.

The catalysed reaction is isopentenyl diphosphate + 2 oxidized [2Fe-2S]-[ferredoxin] + H2O = (2E)-4-hydroxy-3-methylbut-2-enyl diphosphate + 2 reduced [2Fe-2S]-[ferredoxin] + 2 H(+). It catalyses the reaction dimethylallyl diphosphate + 2 oxidized [2Fe-2S]-[ferredoxin] + H2O = (2E)-4-hydroxy-3-methylbut-2-enyl diphosphate + 2 reduced [2Fe-2S]-[ferredoxin] + 2 H(+). The protein operates within isoprenoid biosynthesis; dimethylallyl diphosphate biosynthesis; dimethylallyl diphosphate from (2E)-4-hydroxy-3-methylbutenyl diphosphate: step 1/1. Its pathway is isoprenoid biosynthesis; isopentenyl diphosphate biosynthesis via DXP pathway; isopentenyl diphosphate from 1-deoxy-D-xylulose 5-phosphate: step 6/6. Catalyzes the conversion of 1-hydroxy-2-methyl-2-(E)-butenyl 4-diphosphate (HMBPP) into a mixture of isopentenyl diphosphate (IPP) and dimethylallyl diphosphate (DMAPP). Acts in the terminal step of the DOXP/MEP pathway for isoprenoid precursor biosynthesis. In Synechococcus sp. (strain WH7803), this protein is 4-hydroxy-3-methylbut-2-enyl diphosphate reductase.